The following is an 89-amino-acid chain: Acyl-CoA-binding protein (89 aa).

In terms of domain architecture, ACB spans 3-88 (LKEEFEEHAE…VKQLFEAAGS (86 aa)). Residues 30-34 (YGLYK), lysine 56, and tyrosine 75 contribute to the an acyl-CoA site.

It belongs to the ACBP family.

Binds medium- and long-chain acyl-CoA esters with very high affinity and may function as an intracellular carrier of acyl-CoA esters. In Gossypium hirsutum (Upland cotton), this protein is Acyl-CoA-binding protein.